Here is a 297-residue protein sequence, read N- to C-terminus: Probable endonuclease 4 (297 aa).

The Zn(2+) site is built by histidine 68, histidine 109, glutamate 144, aspartate 178, histidine 181, histidine 213, aspartate 226, histidine 228, and glutamate 258.

It belongs to the AP endonuclease 2 family. It depends on Zn(2+) as a cofactor.

The catalysed reaction is Endonucleolytic cleavage to 5'-phosphooligonucleotide end-products.. In terms of biological role, endonuclease IV plays a role in DNA repair. It cleaves phosphodiester bonds at apurinic or apyrimidinic (AP) sites, generating a 3'-hydroxyl group and a 5'-terminal sugar phosphate. This chain is Probable endonuclease 4, found in Enterococcus faecalis (strain ATCC 700802 / V583).